Here is a 345-residue protein sequence, read N- to C-terminus: Protease HtpX homolog (345 aa).

2 consecutive transmembrane segments (helical) span residues 6–26 (TAMLLAFMTALFMGVGYLVGG) and 27–47 (SNGMVIALLMAGGLNFFSYWN). Histidine 130 is a Zn(2+) binding site. Glutamate 131 is a catalytic residue. Residue histidine 134 participates in Zn(2+) binding. A run of 2 helical transmembrane segments spans residues 145–165 (LTATIAGAISMLGNFAFFMGG) and 179–199 (IGGLLALFVAPFAAMLVQMAI). Zn(2+) is bound at residue glutamate 204.

Belongs to the peptidase M48B family. The cofactor is Zn(2+).

It localises to the cell inner membrane. This chain is Protease HtpX homolog, found in Bartonella henselae (strain ATCC 49882 / DSM 28221 / CCUG 30454 / Houston 1) (Rochalimaea henselae).